A 466-amino-acid polypeptide reads, in one-letter code: Argininosuccinate lyase (466 aa).

Belongs to the lyase 1 family. Argininosuccinate lyase subfamily.

Its subcellular location is the cytoplasm. The enzyme catalyses 2-(N(omega)-L-arginino)succinate = fumarate + L-arginine. The protein operates within amino-acid biosynthesis; L-arginine biosynthesis; L-arginine from L-ornithine and carbamoyl phosphate: step 3/3. This chain is Argininosuccinate lyase, found in Syntrophobacter fumaroxidans (strain DSM 10017 / MPOB).